Consider the following 189-residue polypeptide: Shikimate kinase (189 aa).

Glycine 11–alanine 16 contacts ATP. Residue serine 15 participates in Mg(2+) binding. Substrate contacts are provided by aspartate 33, arginine 57, and glycine 79. Arginine 117 contacts ATP. Substrate is bound at residue arginine 135.

Belongs to the shikimate kinase family. As to quaternary structure, monomer. It depends on Mg(2+) as a cofactor.

The protein localises to the cytoplasm. The catalysed reaction is shikimate + ATP = 3-phosphoshikimate + ADP + H(+). Its pathway is metabolic intermediate biosynthesis; chorismate biosynthesis; chorismate from D-erythrose 4-phosphate and phosphoenolpyruvate: step 5/7. Catalyzes the specific phosphorylation of the 3-hydroxyl group of shikimic acid using ATP as a cosubstrate. The protein is Shikimate kinase of Desulforudis audaxviator (strain MP104C).